Reading from the N-terminus, the 326-residue chain is Peroxidase 39 (326 aa).

An N-terminal signal peptide occupies residues 1–23 (MTRFGLALLMILVIQGLVTFSEA). 4 cysteine pairs are disulfide-bonded: Cys-34/Cys-114, Cys-67/Cys-72, Cys-120/Cys-322, and Cys-199/Cys-232. The active-site Proton acceptor is the His-65. 5 residues coordinate Ca(2+): Asp-66, Val-69, Gly-71, Asp-73, and Ser-75. Asn-79 is a glycosylation site (N-linked (GlcNAc...) asparagine). Residue Pro-162 coordinates substrate. An N-linked (GlcNAc...) asparagine glycan is attached at Asn-167. His-192 is a heme b binding site. Thr-193 contributes to the Ca(2+) binding site. Asn-208 and Asn-238 each carry an N-linked (GlcNAc...) asparagine glycan. Asp-245, Ser-248, and Asp-253 together coordinate Ca(2+).

It belongs to the peroxidase family. Classical plant (class III) peroxidase subfamily. Requires heme b as cofactor. Ca(2+) is required as a cofactor. Slightly expressed in roots.

It localises to the secreted. The enzyme catalyses 2 a phenolic donor + H2O2 = 2 a phenolic radical donor + 2 H2O. In terms of biological role, removal of H(2)O(2), oxidation of toxic reductants, biosynthesis and degradation of lignin, suberization, auxin catabolism, response to environmental stresses such as wounding, pathogen attack and oxidative stress. These functions might be dependent on each isozyme/isoform in each plant tissue. The sequence is that of Peroxidase 39 (PER39) from Arabidopsis thaliana (Mouse-ear cress).